We begin with the raw amino-acid sequence, 503 residues long: Maturase K (503 aa).

The protein belongs to the intron maturase 2 family. MatK subfamily.

It localises to the plastid. It is found in the chloroplast. Usually encoded in the trnK tRNA gene intron. Probably assists in splicing its own and other chloroplast group II introns. In Aethionema cordifolium (Lebanon stonecress), this protein is Maturase K.